A 120-amino-acid chain; its full sequence is Large ribosomal subunit protein uL18 (120 aa).

Residues 1–24 are disordered; that stretch reads MITKAAKNATRKKRHARVRAKLTG. The span at 9–20 shows a compositional bias: basic residues; the sequence is ATRKKRHARVRA.

Belongs to the universal ribosomal protein uL18 family. As to quaternary structure, part of the 50S ribosomal subunit; part of the 5S rRNA/L5/L18/L25 subcomplex. Contacts the 5S and 23S rRNAs.

Its function is as follows. This is one of the proteins that bind and probably mediate the attachment of the 5S RNA into the large ribosomal subunit, where it forms part of the central protuberance. The polypeptide is Large ribosomal subunit protein uL18 (Bacillus mycoides (strain KBAB4) (Bacillus weihenstephanensis)).